A 220-amino-acid chain; its full sequence is Iron-sulfur cluster repair protein YtfE (220 aa).

Belongs to the RIC family. YtfE subfamily. Homodimer.

Its subcellular location is the cytoplasm. Functionally, di-iron-containing protein involved in the repair of iron-sulfur clusters damaged by oxidative and nitrosative stress conditions. This is Iron-sulfur cluster repair protein YtfE from Salmonella paratyphi A (strain AKU_12601).